We begin with the raw amino-acid sequence, 140 residues long: Putative pre-16S rRNA nuclease (140 aa).

It belongs to the YqgF nuclease family.

It is found in the cytoplasm. Its function is as follows. Could be a nuclease involved in processing of the 5'-end of pre-16S rRNA. The protein is Putative pre-16S rRNA nuclease of Vibrio vulnificus (strain YJ016).